The primary structure comprises 738 residues: NADH dehydrogenase [ubiquinone] iron-sulfur protein 1, mitochondrial (738 aa).

The N-terminal 27 residues, 1–27 (MGLGLLASRALRSSRIIRNSTRTIVST), are a transit peptide targeting the mitochondrion. The region spanning 66 to 144 (DVIEVFVDGY…GMKIKTDTPI (79 aa)) is the 2Fe-2S ferredoxin-type domain. Cys-100, Cys-111, Cys-114, and Cys-128 together coordinate [2Fe-2S] cluster. Residues 144–183 (IAKKAREGVMEFLLMNHPLDCPICDQGGECDLQDQSMAFG) form the 4Fe-4S His(Cys)3-ligated-type domain. Residues His-160, Cys-164, Cys-167, Cys-173, Cys-212, Cys-215, Cys-218, and Cys-262 each contribute to the [4Fe-4S] cluster site. Positions 281-337 (LKGTESIDVTDAVGSNIRIDSRGPEVMRVVPRLNEDINEEWISDKTRFFYDGLKRQR) constitute a 4Fe-4S Mo/W bis-MGD-type domain.

It belongs to the complex I 75 kDa subunit family. Complex I is composed of about 45 different subunits. This is a component of the iron-sulfur (IP) fragment of the enzyme. The cofactor is [2Fe-2S] cluster. [4Fe-4S] cluster serves as cofactor.

The protein resides in the mitochondrion inner membrane. The enzyme catalyses a ubiquinone + NADH + 5 H(+)(in) = a ubiquinol + NAD(+) + 4 H(+)(out). In terms of biological role, core subunit of the mitochondrial membrane respiratory chain NADH dehydrogenase (Complex I) that is believed to belong to the minimal assembly required for catalysis. Complex I functions in the transfer of electrons from NADH to the respiratory chain. The immediate electron acceptor for the enzyme is believed to be ubiquinone. This is the largest subunit of complex I and it is a component of the iron-sulfur (IP) fragment of the enzyme. It may form part of the active site crevice where NADH is oxidized. In Solanum tuberosum (Potato), this protein is NADH dehydrogenase [ubiquinone] iron-sulfur protein 1, mitochondrial.